The chain runs to 459 residues: Transcription factor AP-2-beta (459 aa).

Residue Lys-21 forms a Glycyl lysine isopeptide (Lys-Gly) (interchain with G-Cter in SUMO) linkage. The segment at 30–139 is disordered; that stretch reads HDGVPSHSSR…PQLSGLDPRR (110 aa). The span at 35–51 shows a compositional bias: polar residues; the sequence is SHSSRLSQLGSVSQGPY. Residues 121-132 are compositionally biased toward low complexity; sequence LLPQPRAALPQL. Residue Ser-258 is modified to Phosphoserine; by PKA. Residues 299 to 429 form an H-S-H (helix-span-helix), dimerization region; sequence RRKAANVTLL…YLTEALKGMD (131 aa). The segment at 435–459 is disordered; sequence NTTNRHTSGEGPGSKTGDKEEKHRK. Residues 450–459 show a composition bias toward basic and acidic residues; that stretch reads TGDKEEKHRK.

Belongs to the AP-2 family. Binds DNA as a dimer. Can form homodimers or heterodimers with other AP-2 family members. Interacts with CITED4. Interacts with UBE2I. Interacts with KCTD1; this interaction represses transcription activation. Interacts with CITED2 (via C-terminus); the interaction stimulates TFAP2B-transcriptional activity. In terms of processing, sumoylated. Sumoylated on Lys-21; which inhibits transcriptional activity. As to expression, localizes to neurons in areas of the cerebral cortex, cerebellum and hypothalamus (at protein level).

The protein resides in the nucleus. Functionally, sequence-specific DNA-binding protein that interacts with inducible viral and cellular enhancer elements to regulate transcription of selected genes. AP-2 factors bind to the consensus sequence 5'-GCCNNNGGC-3' and activate genes involved in a large spectrum of important biological functions including proper eye, face, body wall, limb and neural tube development. They also suppress a number of genes including MCAM/MUC18, C/EBP alpha and MYC. AP-2-beta appears to be required for normal face and limb development and for proper terminal differentiation and function of renal tubular epithelia. The protein is Transcription factor AP-2-beta (Tfap2b) of Mus musculus (Mouse).